A 350-amino-acid polypeptide reads, in one-letter code: MRYLTAGESHGEALIAIIEGLPSNLFIDAEFINKELERRQKGYGRGGRMAIEKDEIHIISGVRDGKTTGAPLAMEIKNRDYKNWKDKKVPPVTRPRPGHADLPGSIKYNQRDIRNILERASARETAARVAVGSVAKLLLKELNISLKSRVLEIGGAKREEKWKRLIEKAKKEGDTLGGIIEIVIEGVPVGLGSHAQWDRKLDALLAYHVMSVQGIKGVEFGLGFEAARLPGSLVHDDIYYKENEGFYRKTNNAGGIEGGMSNGNPIVIRAAMKPIPTLLRPLDSVDIATKEETKAIYERSDVTAVEAAACVLEAVCAWVIADECLKKFGGDSVEELKRNYDTYLAYVRSF.

Arg-39 and Arg-45 together coordinate NADP(+). Residues 85-104 (KDKKVPPVTRPRPGHADLPG) form a disordered region. Residues 119–121 (RAS), 213–214 (QG), Gly-258, 273–277 (KPIPT), and Arg-299 contribute to the FMN site.

Belongs to the chorismate synthase family. Homotetramer. It depends on FMNH2 as a cofactor.

The catalysed reaction is 5-O-(1-carboxyvinyl)-3-phosphoshikimate = chorismate + phosphate. It functions in the pathway metabolic intermediate biosynthesis; chorismate biosynthesis; chorismate from D-erythrose 4-phosphate and phosphoenolpyruvate: step 7/7. In terms of biological role, catalyzes the anti-1,4-elimination of the C-3 phosphate and the C-6 proR hydrogen from 5-enolpyruvylshikimate-3-phosphate (EPSP) to yield chorismate, which is the branch point compound that serves as the starting substrate for the three terminal pathways of aromatic amino acid biosynthesis. This reaction introduces a second double bond into the aromatic ring system. This Caldanaerobacter subterraneus subsp. tengcongensis (strain DSM 15242 / JCM 11007 / NBRC 100824 / MB4) (Thermoanaerobacter tengcongensis) protein is Chorismate synthase.